We begin with the raw amino-acid sequence, 349 residues long: Core protein VP7 (349 aa).

N-linked (GlcNAc...) asparagine; by host glycosylation is found at Asn193 and Asn287.

Belongs to the orbivirus VP7 family. In terms of assembly, homotrimer that assemble in a complex of 260 capsomers on an inner scaffold composed of VP3.

The protein localises to the virion. The VP7 protein is one of the five proteins (with VP1, VP3, VP4, and VP6) which form the inner capsid of the virus. This is Core protein VP7 (Segment-7) from Antilocapra americana (Pronghorn).